We begin with the raw amino-acid sequence, 447 residues long: N-succinylarginine dihydrolase (447 aa).

Substrate contacts are provided by residues 19 to 28, asparagine 110, and 137 to 138; these read AGLSFGNEAS and HR. The active site involves glutamate 174. Arginine 212 is a substrate binding site. Histidine 248 is a catalytic residue. Substrate is bound by residues aspartate 250 and asparagine 359. Catalysis depends on cysteine 365, which acts as the Nucleophile.

Belongs to the succinylarginine dihydrolase family. As to quaternary structure, homodimer.

It catalyses the reaction N(2)-succinyl-L-arginine + 2 H2O + 2 H(+) = N(2)-succinyl-L-ornithine + 2 NH4(+) + CO2. It functions in the pathway amino-acid degradation; L-arginine degradation via AST pathway; L-glutamate and succinate from L-arginine: step 2/5. Catalyzes the hydrolysis of N(2)-succinylarginine into N(2)-succinylornithine, ammonia and CO(2). In Escherichia coli O6:H1 (strain CFT073 / ATCC 700928 / UPEC), this protein is N-succinylarginine dihydrolase.